Reading from the N-terminus, the 220-residue chain is Claudin-22 (220 aa).

At 1–10 (MALVFRTVAQ) the chain is on the cytoplasmic side. The chain crosses the membrane as a helical span at residues 11–30 (LAGVSLSLLGWVLSCLTNYL). The Extracellular segment spans residues 31–81 (PHWKNLNLDLNEMENWTMGLWQTCVIQEEVGMQCKDFDSFLALPAELRVSR). Residues 82 to 102 (ILMFLSNGLGFLGLLVSGFGL) form a helical membrane-spanning segment. The Cytoplasmic portion of the chain corresponds to 103 to 117 (DCLRIGESQRDLKRR). A helical transmembrane segment spans residues 118-138 (LLILGGILSWASGVTALVPVS). Over 139–164 (WVAHKTVQEFWDENVPDFVPRWEFGE) the chain is Extracellular. Residues 165-185 (ALFLGWFAGLSLLLGGCLLHC) traverse the membrane as a helical segment. Topologically, residues 186–220 (AACSSHAPLASGHYAVAQTQDHHQELETRNTNLKH) are cytoplasmic.

Belongs to the claudin family.

The protein localises to the cell junction. It is found in the tight junction. The protein resides in the cell membrane. Its function is as follows. Plays a major role in tight junction-specific obliteration of the intercellular space, through calcium-independent cell-adhesion activity. This chain is Claudin-22 (CLDN22), found in Homo sapiens (Human).